The primary structure comprises 198 residues: Snake venom metalloproteinase neuwiedase (198 aa).

The 191-residue stretch at 8 to 198 (RYIELVIVAD…QTFLTNHNPQ (191 aa)) folds into the Peptidase M12B domain. Positions 11 and 95 each coordinate Ca(2+). Position 144 (His144) interacts with Zn(2+). Residue Glu145 is part of the active site. Zn(2+) contacts are provided by His148 and His154. Cystine bridges form between Cys159/Cys183 and Cys161/Cys166.

It belongs to the venom metalloproteinase (M12B) family. P-I subfamily. Requires Zn(2+) as cofactor. As to expression, expressed by the venom gland.

The protein resides in the secreted. With respect to regulation, inhibited by EDTA, EGTA and 1,10-phenanthroline, partially inhibited by beta-mercaptoethanol and not inhibited by serine protease inhibitors (leupeptin and aprotinin). Also inhibited by an excess of zinc, mercury and magnesium ions. Extracts of the plant Casearia mariquitensis neutralizes the decrease of platelets and plasma fibrinogen induced by the protease. The same extracts also partially inhibit Bbeta chain cleavage, but not Aalpha chain cleavage. In terms of biological role, this metalloprotease hydrolyzes the Aalpha chain of fibrin and fibrinogen first followed by the Bbeta chain and shows no effect on the gamma chain. It is also able to degrade type I collagen, fibronectin, laminin and induces inflammatory reaction. It is devoid of hemorrhagic and thrombotic activities, except in lung where it induces pulmonary bleeding. It also induces a mild myotoxic reaction. It is not able to inhibit platelet aggregation, but it induces decrease of platelets and plasma fibrinogen. It contributes to local tissue damage by inducing edema, inflammatory infiltrate and mild myotoxicity, and by degrading extracellular matrix components. This is Snake venom metalloproteinase neuwiedase from Bothrops pauloensis (Neuwied's lancehead).